The sequence spans 416 residues: Tyrosine-protein phosphatase non-receptor type 2 (416 aa).

The Tyrosine-protein phosphatase domain occupies 5-275 (IEREFEELDA…RFSYMAIIEG (271 aa)). The residue at position 22 (tyrosine 22) is a Phosphotyrosine. At serine 52 the chain carries Phosphoserine. Tyrosine 68 carries the phosphotyrosine modification. Residues aspartate 182, 216–222 (CSAGIGR), and glutamine 260 each bind substrate. The active-site Phosphocysteine intermediate is the cysteine 216. Cysteine 216 is subject to S-nitrosocysteine. A phosphoserine mark is found at serine 293, serine 298, serine 304, serine 320, and serine 339. The interval 341–410 (ESILRKRIRE…WTLLFQLNVL (70 aa)) is endoplasmic reticulum location. The tract at residues 371–410 (ERKRKRWLYWQPILTKMGFVSVILVGALVGWTLLFQLNVL) is may mediate interaction with STX17.

This sequence belongs to the protein-tyrosine phosphatase family. Non-receptor class 1 subfamily. Interacts with RMDN3. Interacts with TMED9. Interacts with STX17; dephosphorylates STX17. Interacts with ITGA1 (via cytoplasmic domain); activates the phosphatase activity towards EGFR. Interacts with TRAF2; probably involved in tumor necrosis factor-mediated signaling. Interacts with MET. Interacts with FAM220A and STAT3; interaction with FAM220A promotes interaction of PTPN2 with transcriptional activator STAT3, leading to dephosphorylation of STAT3 by PTPN2 and negative regulation of STAT3 transcriptional activator activity. Post-translationally, specifically phosphorylated in a cell cycle-dependent manner by cyclin-dependent kinases CDK1 and CDK2. Probably activated through phosphorylation by PKR. In terms of tissue distribution, does not show tissue- or cell-type specificity although levels of transcription show variability. Macrophages showed higher levels of expression than lymphocytes.

The protein resides in the cytoplasm. The protein localises to the endoplasmic reticulum-Golgi intermediate compartment. Its subcellular location is the endoplasmic reticulum. It is found in the nucleus membrane. It localises to the nucleus. The protein resides in the cell membrane. It carries out the reaction O-phospho-L-tyrosyl-[protein] + H2O = L-tyrosyl-[protein] + phosphate. In terms of biological role, non-receptor type tyrosine-specific phosphatase that dephosphorylates receptor protein tyrosine kinases including INSR, EGFR, CSF1R, PDGFR. Also dephosphorylates non-receptor protein tyrosine kinases like JAK1, JAK2, JAK3, Src family kinases, STAT1, STAT3 and STAT6 either in the nucleus or the cytoplasm. Negatively regulates numerous signaling pathways and biological processes like hematopoiesis, inflammatory response, cell proliferation and differentiation, and glucose homeostasis. Plays a multifaceted and important role in the development of the immune system. Functions in T-cell receptor signaling through dephosphorylation of FYN and LCK to control T-cells differentiation and activation. Dephosphorylates CSF1R, negatively regulating its downstream signaling and macrophage differentiation. Negatively regulates cytokine (IL2/interleukin-2 and interferon)-mediated signaling through dephosphorylation of the cytoplasmic kinases JAK1, JAK3 and their substrate STAT1, that propagate signaling downstream of the cytokine receptors. Also regulates the IL6/interleukin-6 and IL4/interleukin-4 cytokine signaling through dephosphorylation of STAT3 and STAT6 respectively. In addition to the immune system, it is involved in anchorage-dependent, negative regulation of EGF-stimulated cell growth. Activated by the integrin ITGA1/ITGB1, it dephosphorylates EGFR and negatively regulates EGF signaling. Dephosphorylates PDGFRB and negatively regulates platelet-derived growth factor receptor-beta signaling pathway and therefore cell proliferation. Negatively regulates tumor necrosis factor-mediated signaling downstream via MAPK through SRC dephosphorylation. May also regulate the hepatocyte growth factor receptor signaling pathway through dephosphorylation of the hepatocyte growth factor receptor MET. Also plays an important role in glucose homeostasis. For instance, negatively regulates the insulin receptor signaling pathway through the dephosphorylation of INSR and control gluconeogenesis and liver glucose production through negative regulation of the IL6 signaling pathways. May also bind DNA. In Rattus norvegicus (Rat), this protein is Tyrosine-protein phosphatase non-receptor type 2 (Ptpn2).